The primary structure comprises 381 residues: L-lactate dehydrogenase (381 aa).

Residues 1–380 (MIISASTDYR…SADSLVRELG (380 aa)) enclose the FMN hydroxy acid dehydrogenase domain. Tyr24 contacts substrate. Ser106 and Gln127 together coordinate FMN. Substrate is bound at residue Tyr129. An FMN-binding site is contributed by Thr155. Arg164 serves as a coordination point for substrate. Lys251 is a binding site for FMN. Residue His275 is the Proton acceptor of the active site. Position 278 (Arg278) interacts with substrate. 306–330 (DSGIRTGLDVVRMIALGADSVLLGR) contacts FMN.

Belongs to the FMN-dependent alpha-hydroxy acid dehydrogenase family. Homotetramer. Requires FMN as cofactor.

It localises to the cell inner membrane. The catalysed reaction is (S)-lactate + A = pyruvate + AH2. Catalyzes the conversion of L-lactate to pyruvate. Is coupled to the respiratory chain. This chain is L-lactate dehydrogenase, found in Pseudomonas paraeruginosa (strain DSM 24068 / PA7) (Pseudomonas aeruginosa (strain PA7)).